The chain runs to 131 residues: Profilin-A (131 aa).

This sequence belongs to the profilin family. In terms of assembly, occurs in many kinds of cells as a complex with monomeric actin in a 1:1 ratio.

The protein localises to the cytoplasm. It localises to the cytoskeleton. Its function is as follows. Binds to actin and affects the structure of the cytoskeleton. At high concentrations, profilin prevents the polymerization of actin, whereas it enhances it at low concentrations. By binding to PIP2, it inhibits the formation of IP3 and DG. May serve as a modulator in pollen germination and pollen tube growth. This Oryza sativa subsp. japonica (Rice) protein is Profilin-A.